Reading from the N-terminus, the 234-residue chain is MEFSPPLQRATLIQRYKRFLADVITPDGRELTLHCPNTGAMTGCATPGDTVWYSTSDNTKRKYPHTWELTQSQSGAFICVNTLWANRLTKEAILNESISELSGYSSLKSEVKYGAERSRIDFMLQADSRPDCYIEVKSVTLAENEQGYFPDAVTERGQKHLRELMSVAAEGQRAVIFFAVLHSAITRFSPARHIDEKYAQLLSEAQQRGVEILAYKAEISAEGMALKKSLPVTL.

Residues 201-220 (LLSEAQQRGVEILAYKAEIS) constitute a DNA-binding region (H-T-H motif).

Belongs to the SfsA family.

In terms of biological role, binds to DNA non-specifically. Could be a regulatory factor involved in maltose metabolism. The sequence is that of Sugar fermentation stimulation protein A from Escherichia coli (strain 55989 / EAEC).